The following is a 278-amino-acid chain: Thiazole synthase (278 aa).

K109 (schiff-base intermediate with DXP) is an active-site residue. 1-deoxy-D-xylulose 5-phosphate is bound by residues G170, 197-198 (AG), and 219-220 (NT).

This sequence belongs to the ThiG family. Homotetramer. Forms heterodimers with either ThiH or ThiS.

It is found in the cytoplasm. The catalysed reaction is [ThiS sulfur-carrier protein]-C-terminal-Gly-aminoethanethioate + 2-iminoacetate + 1-deoxy-D-xylulose 5-phosphate = [ThiS sulfur-carrier protein]-C-terminal Gly-Gly + 2-[(2R,5Z)-2-carboxy-4-methylthiazol-5(2H)-ylidene]ethyl phosphate + 2 H2O + H(+). It functions in the pathway cofactor biosynthesis; thiamine diphosphate biosynthesis. In terms of biological role, catalyzes the rearrangement of 1-deoxy-D-xylulose 5-phosphate (DXP) to produce the thiazole phosphate moiety of thiamine. Sulfur is provided by the thiocarboxylate moiety of the carrier protein ThiS. In vitro, sulfur can be provided by H(2)S. In Cupriavidus taiwanensis (strain DSM 17343 / BCRC 17206 / CCUG 44338 / CIP 107171 / LMG 19424 / R1) (Ralstonia taiwanensis (strain LMG 19424)), this protein is Thiazole synthase.